We begin with the raw amino-acid sequence, 237 residues long: NAD-dependent protein deacylase (237 aa).

One can recognise a Deacetylase sirtuin-type domain in the interval Met-1–Leu-235. An NAD(+)-binding site is contributed by Gly-8–Trp-28. The substrate site is built by Tyr-53 and Arg-56. Gln-86–Asp-89 provides a ligand contact to NAD(+). His-104 acts as the Proton acceptor in catalysis. The Zn(2+) site is built by Cys-112, Cys-115, Cys-138, and Cys-140. NAD(+) is bound by residues Gly-177–Ser-179, Asn-203–Glu-205, and Ala-221.

The protein belongs to the sirtuin family. Class III subfamily. Zn(2+) is required as a cofactor.

The protein resides in the cytoplasm. The catalysed reaction is N(6)-acetyl-L-lysyl-[protein] + NAD(+) + H2O = 2''-O-acetyl-ADP-D-ribose + nicotinamide + L-lysyl-[protein]. The enzyme catalyses N(6)-succinyl-L-lysyl-[protein] + NAD(+) + H2O = 2''-O-succinyl-ADP-D-ribose + nicotinamide + L-lysyl-[protein]. Functionally, NAD-dependent lysine deacetylase and desuccinylase that specifically removes acetyl and succinyl groups on target proteins. Modulates the activities of several proteins which are inactive in their acylated form. The polypeptide is NAD-dependent protein deacylase (Mycobacterium bovis (strain ATCC BAA-935 / AF2122/97)).